The sequence spans 493 residues: Gamma-aminobutyric acid receptor subunit alpha-3 (493 aa).

Positions 1–28 (MITTQMWHFYVTRVGLLLLISILPGTTG) are cleaved as a signal peptide. The disordered stretch occupies residues 27-54 (TGQGESRRQEPGDFVKQDIGGLSPKHAP). Topologically, residues 29–276 (QGESRRQEPG…THFHLKRKIG (248 aa)) are extracellular. Basic and acidic residues predominate over residues 31-42 (ESRRQEPGDFVK). N-linked (GlcNAc...) asparagine glycosylation occurs at N63. Position 119 (R119) interacts with 4-aminobutanoate. N163 and N176 each carry an N-linked (GlcNAc...) asparagine glycan. T182 contacts 4-aminobutanoate. C191 and C205 form a disulfide bridge. The N-linked (GlcNAc...) asparagine glycan is linked to N228. The next 3 membrane-spanning stretches (helical) occupy residues 277 to 298 (YFVI…VSFW), 304 to 325 (VPAR…SISA), and 338 to 359 (MDWF…FATV). The Cytoplasmic segment spans residues 360-458 (NYFTKRSWAW…TYNSVSKVDK (99 aa)). Position 427 is a phosphoserine (S427). T428 carries the post-translational modification Phosphothreonine. S434 and S443 each carry phosphoserine. A helical transmembrane segment spans residues 459–480 (ISRIIFPVLFAIFNLVYWATYV).

Belongs to the ligand-gated ion channel (TC 1.A.9) family. Gamma-aminobutyric acid receptor (TC 1.A.9.5) subfamily. GABRA3 sub-subfamily. As to quaternary structure, heteropentamer, formed by a combination of alpha (GABRA1-6), beta (GABRB1-3), gamma (GABRG1-3), delta (GABRD), epsilon (GABRE), rho (GABRR1-3), pi (GABRP) and theta (GABRQ) chains, each subunit exhibiting distinct physiological and pharmacological properties. Binds UBQLN1. Interacts with GPHN. As to expression, expressed in most brain regions. Expressed in lungs, in alveolar epithelium.

The protein resides in the postsynaptic cell membrane. It is found in the cell membrane. The enzyme catalyses chloride(in) = chloride(out). Alpha subunit of the heteropentameric ligand-gated chloride channel gated by gamma-aminobutyric acid (GABA), a major inhibitory neurotransmitter in the brain. GABA-gated chloride channels, also named GABA(A) receptors (GABAAR), consist of five subunits arranged around a central pore and contain GABA active binding site(s) located at the alpha and beta subunit interface(s). When activated by GABA, GABAARs selectively allow the flow of chloride anions across the cell membrane down their electrochemical gradient. Chloride influx into the postsynaptic neuron following GABAAR opening decreases the neuron ability to generate a new action potential, thereby reducing nerve transmission. This Rattus norvegicus (Rat) protein is Gamma-aminobutyric acid receptor subunit alpha-3.